A 197-amino-acid polypeptide reads, in one-letter code: Putative phosphopantothenoylcysteine decarboxylase (197 aa).

FMN is bound by residues phenylalanine 52 and 102–105 (SANT). Asparagine 139 serves as a coordination point for substrate. Cysteine 174 acts as the Proton donor in catalysis.

Belongs to the HFCD (homooligomeric flavin containing Cys decarboxylase) superfamily. In terms of assembly, homotrimer. Requires FMN as cofactor.

It carries out the reaction N-[(R)-4-phosphopantothenoyl]-L-cysteine + H(+) = (R)-4'-phosphopantetheine + CO2. The protein operates within cofactor biosynthesis; coenzyme A biosynthesis; CoA from (R)-pantothenate: step 3/5. In terms of biological role, necessary for the biosynthesis of coenzyme A. Catalyzes the decarboxylation of 4-phosphopantothenoylcysteine to form 4'-phosphopantotheine. The chain is Putative phosphopantothenoylcysteine decarboxylase (ppcdc) from Dictyostelium discoideum (Social amoeba).